A 25-amino-acid chain; its full sequence is LASP1 neighbor protein (25 aa).

The helical transmembrane segment at 4–24 threads the bilayer; it reads IFILMFFAIIGLVILSYIIYL.

The protein localises to the membrane. May play a key role in the skin fibroblasts (FBs)-keratinocyte-like cells (KLCs). This is LASP1 neighbor protein from Homo sapiens (Human).